Reading from the N-terminus, the 119-residue chain is MPRVKGGTVTRRRRKKILKLAKGYFGSKHRLYKVANQQVMKSLMYAYRDRRQRKRDFRKLWITRINAAARMNGLSYSRLMHGLKLAGIEVNRKMLADLAVNDAAAFTQLANIAKENLNK.

It belongs to the bacterial ribosomal protein bL20 family.

Its function is as follows. Binds directly to 23S ribosomal RNA and is necessary for the in vitro assembly process of the 50S ribosomal subunit. It is not involved in the protein synthesizing functions of that subunit. In Anoxybacillus flavithermus (strain DSM 21510 / WK1), this protein is Large ribosomal subunit protein bL20.